A 210-amino-acid polypeptide reads, in one-letter code: Redox-sensing transcriptional repressor Rex (210 aa).

The H-T-H motif DNA-binding region spans 17-56 (KYHRYLGDLLDRDIQRISSKELSDIIGFTASQIRQDLNNF). 91-96 (GAGNLG) is an NAD(+) binding site.

This sequence belongs to the transcriptional regulatory Rex family. In terms of assembly, homodimer.

It localises to the cytoplasm. Its function is as follows. Modulates transcription in response to changes in cellular NADH/NAD(+) redox state. In Clostridioides difficile (strain 630) (Peptoclostridium difficile), this protein is Redox-sensing transcriptional repressor Rex.